Here is a 349-residue protein sequence, read N- to C-terminus: Ion-translocating oxidoreductase complex subunit D (349 aa).

3 consecutive transmembrane segments (helical) span residues 36 to 56, 77 to 99, and 124 to 144; these read CAFF…VALS, SAML…WMIV, and AMAA…TWIA. Thr185 carries the FMN phosphoryl threonine modification. A run of 5 helical transmembrane segments spans residues 212–232, 239–259, 265–285, 291–311, and 315–335; these read STGV…IVLL, WHIS…GFLL, ASPL…FIAT, ATSP…VYII, and GGYP…APFI.

It belongs to the NqrB/RnfD family. The complex is composed of six subunits: RnfA, RnfB, RnfC, RnfD, RnfE and RnfG. FMN serves as cofactor.

It is found in the cell inner membrane. Functionally, part of a membrane-bound complex that couples electron transfer with translocation of ions across the membrane. This is Ion-translocating oxidoreductase complex subunit D from Shewanella oneidensis (strain ATCC 700550 / JCM 31522 / CIP 106686 / LMG 19005 / NCIMB 14063 / MR-1).